Consider the following 143-residue polypeptide: Small ribosomal subunit protein uS12B (143 aa).

The residue at position 62 (Pro62) is a 3,4-dihydroxyproline.

The protein belongs to the universal ribosomal protein uS12 family. Component of the small ribosomal subunit (SSU). Mature yeast ribosomes consist of a small (40S) and a large (60S) subunit. The 40S small subunit contains 1 molecule of ribosomal RNA (18S rRNA) and at least 33 different proteins. The large 60S subunit contains 3 rRNA molecules (25S, 5.8S and 5S rRNA) and at least 46 different proteins. Hydroxylation at Pro-62 affects translation termination efficiency.

The protein resides in the cytoplasm. It localises to the nucleus. The protein localises to the nucleolus. Its function is as follows. Component of the ribosome, a large ribonucleoprotein complex responsible for the synthesis of proteins in the cell. The small ribosomal subunit (SSU) binds messenger RNAs (mRNAs) and translates the encoded message by selecting cognate aminoacyl-transfer RNA (tRNA) molecules. The large subunit (LSU) contains the ribosomal catalytic site termed the peptidyl transferase center (PTC), which catalyzes the formation of peptide bonds, thereby polymerizing the amino acids delivered by tRNAs into a polypeptide chain. The nascent polypeptides leave the ribosome through a tunnel in the LSU and interact with protein factors that function in enzymatic processing, targeting, and the membrane insertion of nascent chains at the exit of the ribosomal tunnel. The sequence is that of Small ribosomal subunit protein uS12B (rps2302) from Schizosaccharomyces pombe (strain 972 / ATCC 24843) (Fission yeast).